The sequence spans 573 residues: Urease subunit alpha 2 (573 aa).

Residues 135–573 (GGMDTHVHYI…ISLNQLYFFS (439 aa)) form the Urease domain. Residues His-140, His-142, and Lys-223 each contribute to the Ni(2+) site. Lys-223 is subject to N6-carboxylysine. His-225 lines the substrate pocket. Residues His-252 and His-278 each contribute to the Ni(2+) site. His-326 acts as the Proton donor in catalysis. Position 366 (Asp-366) interacts with Ni(2+).

Belongs to the metallo-dependent hydrolases superfamily. Urease alpha subunit family. In terms of assembly, heterotrimer of UreA (gamma), UreB (beta) and UreC (alpha) subunits. Three heterotrimers associate to form the active enzyme. Ni cation serves as cofactor. In terms of processing, carboxylation allows a single lysine to coordinate two nickel ions.

The protein resides in the cytoplasm. The enzyme catalyses urea + 2 H2O + H(+) = hydrogencarbonate + 2 NH4(+). It participates in nitrogen metabolism; urea degradation; CO(2) and NH(3) from urea (urease route): step 1/1. The sequence is that of Urease subunit alpha 2 from Brucella melitensis biotype 1 (strain ATCC 23456 / CCUG 17765 / NCTC 10094 / 16M).